Consider the following 207-residue polypeptide: Ribonuclease HII (207 aa).

Residues 10–199 (RLIAGVDEVG…VRNALLDAEL (190 aa)) form the RNase H type-2 domain. The a divalent metal cation site is built by aspartate 16, glutamate 17, and aspartate 108.

The protein belongs to the RNase HII family. Mn(2+) is required as a cofactor. Mg(2+) serves as cofactor.

The protein localises to the cytoplasm. It catalyses the reaction Endonucleolytic cleavage to 5'-phosphomonoester.. Endonuclease that specifically degrades the RNA of RNA-DNA hybrids. The chain is Ribonuclease HII from Erwinia tasmaniensis (strain DSM 17950 / CFBP 7177 / CIP 109463 / NCPPB 4357 / Et1/99).